The primary structure comprises 170 residues: Cathelicidin antimicrobial peptide (170 aa).

The first 30 residues, 1–30 (MKTQRHGPSLGRWSLVLLLLGLVMPLAIVA), serve as a signal peptide directing secretion. The propeptide at 31 to 131 (QVLSYQEAVL…DISCDKDNRR (101 aa)) is cathelin-like domain (CLD). 2 disulfides stabilise this stretch: Cys86-Cys97 and Cys108-Cys125. The interval 150–162 (LKKIGQKIKDFLG) is active core.

It belongs to the cathelicidin family. As to quaternary structure, monomer, homodimer or homotrimer (in vitro). Oligomerizes as tetra- or hexamer in solution (in vitro). Post-translationally, proteolytically cleaved by proteinase PRTN3 into antibacterial peptide LL-37. Proteolytically cleaved by cathepsin CTSG and neutrophil elastase ELANE. In terms of processing, resistant to proteolytic degradation in solution, and when bound to both zwitterionic (mimicking mammalian membranes) and negatively charged membranes (mimicking bacterial membranes). After secretion onto the skin surface, the CAMP gene product is processed by a serine protease-dependent mechanism into multiple novel antimicrobial peptides distinct from and shorter than cathelicidin LL-37. These peptides show enhanced antimicrobial action, acquiring the ability to kill skin pathogens such as S.aureus, E.coli and C.albicans. These peptides have lost the ability to stimulate CXCL8/IL8 release from keratinocytes. The peptides act synergistically, killing bacteria at lower concentrations when present together, and maintain activity at increased salt condition.

It is found in the secreted. It localises to the vesicle. Antimicrobial protein that is an integral component of the innate immune system. Binds to bacterial lipopolysaccharides (LPS). Acts via neutrophil N-formyl peptide receptors to enhance the release of CXCL2. Postsecretory processing generates multiple cathelicidin antimicrobial peptides with various lengths which act as a topical antimicrobial defense in sweat on skin. The unprocessed precursor form, cathelicidin antimicrobial peptide, inhibits the growth of Gram-negative E.coli and E.aerogenes with efficiencies comparable to that of the mature peptide LL-37 (in vitro). Functionally, antimicrobial peptide that is an integral component of the innate immune system. Binds to bacterial lipopolysaccharides (LPS). Causes membrane permeabilization by forming transmembrane pores (in vitro). Causes lysis of E.coli. Exhibits antimicrobial activity against Gram-negative bacteria such as P.aeruginosa, S.typhimurium, E.aerogenes, E.coli and P.syringae, Gram-positive bacteria such as L.monocytogenes, S.epidermidis, S.pyogenes and S.aureus, as well as vancomycin-resistant enterococci (in vitro). Exhibits antimicrobial activity against methicillin-resistant S.aureus, P.mirabilis, and C.albicans in low-salt media, but not in media containing 100 mM NaCl (in vitro). Forms chiral supramolecular assemblies with quinolone signal (PQS) molecules of P.aeruginosa, which may lead to interference of bacterial quorum signaling and perturbance of bacterial biofilm formation. May form supramolecular fiber-like assemblies on bacterial membranes. Induces cytokine and chemokine producation as well as TNF/TNFA and CSF2/GMCSF production in normal human keratinocytes. Exhibits hemolytic activity against red blood cells. Its function is as follows. Exhibits antimicrobial activity against E.coli and B.megaterium (in vitro). This chain is Cathelicidin antimicrobial peptide, found in Trachypithecus obscurus (Dusky leaf-monkey).